Here is a 504-residue protein sequence, read N- to C-terminus: MEFSTQTTASLHLIKTSALAVGVYADGVLSPAAEQIDHASNGAIRAVTKTEFRGRAGATLVLRNLAGISAQRVVLVGLGKQEEYSVRAHSGAEQAFAAYLVAAQLTEGVSTLAALPIENSTMRDRARAAAIAAGQATYHYDATFGKPDREALPKLKKITQIIERAEAAQTQQGLREGAAIANGMALTRTLGNLPGNICTPTYLGETARKLAREFKTLIKVEVLDRKQVEALGMGSFVSVARGSAEPLRFVVLRYNGKPATARRTRGAAGPVVLVGKGITFDAGGISIKPAATMDEMKYDMCGAASVLGTFRALAELAPALEVVGLIAACENLPSGTANKPGDVVTSMSGQTIEILNTDAEGRLVLCDALTYAERFKPSAVIDIATLTGACVVALGGVNTGLFSKDDALASALLEAGRQTQDPAWRMPLDDAYQEQLRSNFADIANIGGPQAGAVTAACFLSRFTQAYPWAHLDIAGTAWRGGKDKGATGRPVPLLMQYLLNQAA.

Residues Lys-276 and Asp-281 each contribute to the Mn(2+) site. The active site involves Lys-288. Residues Asp-299, Asp-358, and Glu-360 each contribute to the Mn(2+) site. Arg-362 is an active-site residue.

This sequence belongs to the peptidase M17 family. It depends on Mn(2+) as a cofactor.

The protein resides in the cytoplasm. The catalysed reaction is Release of an N-terminal amino acid, Xaa-|-Yaa-, in which Xaa is preferably Leu, but may be other amino acids including Pro although not Arg or Lys, and Yaa may be Pro. Amino acid amides and methyl esters are also readily hydrolyzed, but rates on arylamides are exceedingly low.. It carries out the reaction Release of an N-terminal amino acid, preferentially leucine, but not glutamic or aspartic acids.. In terms of biological role, presumably involved in the processing and regular turnover of intracellular proteins. Catalyzes the removal of unsubstituted N-terminal amino acids from various peptides. The protein is Probable cytosol aminopeptidase of Bordetella avium (strain 197N).